A 241-amino-acid chain; its full sequence is Tetraspanin-1 (241 aa).

Topologically, residues Met1 to Met11 are cytoplasmic. Residues Ile12–Val32 form a helical membrane-spanning segment. At Ser33–Gln52 the chain is on the extracellular side. The chain crosses the membrane as a helical span at residues Phe53–Leu73. Residues Gly74–Thr88 are Cytoplasmic-facing. Residues Phe89–Val109 form a helical membrane-spanning segment. The Extracellular segment spans residues Tyr110–Asn211. Asn141, Asn154, Asn178, and Asn184 each carry an N-linked (GlcNAc...) asparagine glycan. A helical membrane pass occupies residues Ala212–Val232. At Ser233 to Gln241 the chain is on the cytoplasmic side.

The protein belongs to the tetraspanin (TM4SF) family. Interacts with SLC19A2. Interacts with NTRK1/TRKA.

It localises to the cell membrane. Its subcellular location is the lysosome membrane. Its function is as follows. Structural component of specialized membrane microdomains known as tetraspanin-enriched microdomains (TERMs), which act as platforms for receptor clustering and signaling. Participates thereby in diverse biological functions such as cell signal transduction, adhesion, migration and protein trafficking. Regulates neuronal differentiation in response to NGF by facilitating NGF-mediated activation of NTRK1/TRKA receptor tyrosine kinase and subsequent downstream signaling pathways. Plays a role in the inhibition of TNFalpha-induced apoptosis. Mechanistically, inhibits the NF-kappa-B signaling pathway by blocking phosphorylation of CHUK. Also promotes the stability of the thiamine transporter 1/SLC19A2 in intestinal epithelial cells leading to an increase of thiamine uptake process. This chain is Tetraspanin-1 (TSPAN1), found in Homo sapiens (Human).